We begin with the raw amino-acid sequence, 91 residues long: MKVSATAFAVLLMAAALCAPASASPYASDTTPCCFAYISRPLPRTHVQEYFYTSSKCSMAAVVFITRKNRQVCANPEKKWVREYINALELS.

Residues 1 to 23 (MKVSATAFAVLLMAAALCAPASA) form the signal peptide. Intrachain disulfides connect cysteine 33–cysteine 57 and cysteine 34–cysteine 73.

This sequence belongs to the intercrine beta (chemokine CC) family.

Its subcellular location is the secreted. Functionally, chemoattractant for blood monocytes, memory T-helper cells and eosinophils. Causes the release of histamine from basophils and activates eosinophils. May activate several chemokine receptors including CCR1, CCR3, CCR4 and CCR5. May also be an agonist of the G protein-coupled receptor GPR75. Together with GPR75, may play a role in neuron survival through activation of a downstream signaling pathway involving the PI3, Akt and MAP kinases. By activating GPR75 may also play a role in insulin secretion by islet cells. The sequence is that of C-C motif chemokine 5 (CCL5) from Bos taurus (Bovine).